The primary structure comprises 53 residues: Large ribosomal subunit protein eL40 (53 aa).

It belongs to the eukaryotic ribosomal protein eL40 family.

The chain is Large ribosomal subunit protein eL40 from Staphylothermus marinus (strain ATCC 43588 / DSM 3639 / JCM 9404 / F1).